Here is a 341-residue protein sequence, read N- to C-terminus: DNA-directed RNA polymerase subunit alpha (341 aa).

Residues M1–N226 are alpha N-terminal domain (alpha-NTD). The segment at A241 to L341 is alpha C-terminal domain (alpha-CTD).

This sequence belongs to the RNA polymerase alpha chain family. In terms of assembly, homodimer. The RNAP catalytic core consists of 2 alpha, 1 beta, 1 beta' and 1 omega subunit. When a sigma factor is associated with the core the holoenzyme is formed, which can initiate transcription.

It catalyses the reaction RNA(n) + a ribonucleoside 5'-triphosphate = RNA(n+1) + diphosphate. Functionally, DNA-dependent RNA polymerase catalyzes the transcription of DNA into RNA using the four ribonucleoside triphosphates as substrates. The chain is DNA-directed RNA polymerase subunit alpha from Acidothermus cellulolyticus (strain ATCC 43068 / DSM 8971 / 11B).